Here is a 272-residue protein sequence, read N- to C-terminus: Putative UTP--glucose-1-phosphate uridylyltransferase (272 aa).

It belongs to the UDPGP type 2 family.

It carries out the reaction alpha-D-glucose 1-phosphate + UTP + H(+) = UDP-alpha-D-glucose + diphosphate. The sequence is that of Putative UTP--glucose-1-phosphate uridylyltransferase (ytdA) from Bacillus subtilis (strain 168).